The chain runs to 170 residues: Adenine phosphoribosyltransferase (170 aa).

Belongs to the purine/pyrimidine phosphoribosyltransferase family. As to quaternary structure, homodimer.

The protein localises to the cytoplasm. The catalysed reaction is AMP + diphosphate = 5-phospho-alpha-D-ribose 1-diphosphate + adenine. Its pathway is purine metabolism; AMP biosynthesis via salvage pathway; AMP from adenine: step 1/1. Catalyzes a salvage reaction resulting in the formation of AMP, that is energically less costly than de novo synthesis. In Thermotoga neapolitana (strain ATCC 49049 / DSM 4359 / NBRC 107923 / NS-E), this protein is Adenine phosphoribosyltransferase.